The primary structure comprises 688 residues: Mitochondrial potassium channel ATP-binding subunit (688 aa).

The N-terminal 31 residues, 1–31, are a transit peptide targeting the mitochondrion; that stretch reads MLFHFLQAGLRQCRPPARLVGLETGLSGARG. 4 helical membrane-spanning segments follow: residues 115-135, 168-188, 268-288, and 342-362; these read PQLI…LLNI, LKLL…IVLL, GLLL…GSFL, and VLGV…NCIV. An ABC transmembrane type-1 domain is found at 121 to 409; it reads LTAVLLAFGA…MSVLFGQVVR (289 aa). The ABC transporter domain maps to 442–679; that stretch reads IHFKDVSFSY…GGLYADLIRR (238 aa). 477 to 484 serves as a coordination point for ATP; sequence GQSGGGKS.

Belongs to the ABC transporter superfamily. ABCB family. Multidrug resistance exporter (TC 3.A.1.201) subfamily. As to quaternary structure, component of the mitochondrial potassium channel (mitoK(ATP)).

The protein resides in the mitochondrion inner membrane. In terms of biological role, ATP-binding subunit of the mitochondrial ATP-gated potassium channel (mitoK(ATP)). Together with pore-forming subunit CCDC51/MITOK of the mitoK(ATP) channel, mediates ATP-dependent potassium currents across the mitochondrial inner membrane. An increase in ATP intracellular levels closes the channel, inhibiting K(+) transport, whereas a decrease in ATP levels enhances K(+) uptake in the mitochondrial matrix. Plays a role in mitochondrial iron transport. Required for maintenance of normal cardiac function, possibly by influencing mitochondrial iron export and regulating the maturation of cytosolic iron sulfur cluster-containing enzymes. The chain is Mitochondrial potassium channel ATP-binding subunit from Xenopus tropicalis (Western clawed frog).